We begin with the raw amino-acid sequence, 247 residues long: ATP synthase subunit a, chloroplastic (247 aa).

The next 5 helical transmembrane spans lie at 38–58, 95–115, 134–154, 199–219, and 220–240; these read QVLI…AIAV, VPFI…GALL, INTT…AGLT, LVVV…VMFL, and GLFT…AYIG.

This sequence belongs to the ATPase A chain family. As to quaternary structure, F-type ATPases have 2 components, CF(1) - the catalytic core - and CF(0) - the membrane proton channel. CF(1) has five subunits: alpha(3), beta(3), gamma(1), delta(1), epsilon(1). CF(0) has four main subunits: a, b, b' and c.

It localises to the plastid. Its subcellular location is the chloroplast thylakoid membrane. Its function is as follows. Key component of the proton channel; it plays a direct role in the translocation of protons across the membrane. The polypeptide is ATP synthase subunit a, chloroplastic (Ceratophyllum demersum (Rigid hornwort)).